Here is an 88-residue protein sequence, read N- to C-terminus: Large ribosomal subunit protein eL37 (88 aa).

Residues Cys-17, Cys-20, Cys-32, and Cys-35 each contribute to the Zn(2+) site. The C4-type zinc-finger motif lies at 17–35 (CNRCGRRSFHVQKKTCSSC).

It belongs to the eukaryotic ribosomal protein eL37 family. Zn(2+) serves as cofactor.

In terms of biological role, binds to the 23S rRNA. The protein is Large ribosomal subunit protein eL37 (RPL37) of Candida albicans (Yeast).